The chain runs to 699 residues: Serine/threonine-protein kinase PRR2 (699 aa).

The disordered stretch occupies residues S168–H193. Over residues N184–H193 the composition is skewed to polar residues. Residues R361 to I653 form the Protein kinase domain. ATP contacts are provided by residues L367 to V375 and K390. D484 serves as the catalytic Proton acceptor.

The protein belongs to the protein kinase superfamily. Ser/Thr protein kinase family.

The enzyme catalyses L-seryl-[protein] + ATP = O-phospho-L-seryl-[protein] + ADP + H(+). It carries out the reaction L-threonyl-[protein] + ATP = O-phospho-L-threonyl-[protein] + ADP + H(+). Its function is as follows. Protein kinase that functions as a regulator in the pheromone-induced mating pathway downstream of mitogen-activated protein kinase (MAPK) FUS3. Diminishes transcriptional induction of genes in response to pheromone signaling. This Saccharomyces cerevisiae (strain ATCC 204508 / S288c) (Baker's yeast) protein is Serine/threonine-protein kinase PRR2 (PRR2).